We begin with the raw amino-acid sequence, 128 residues long: Protein Wnt-2b-B (128 aa).

2 disulfide bridges follow: cysteine 3–cysteine 16 and cysteine 5–cysteine 11. Serine 8 is lipidated: O-palmitoleoyl serine; by PORCN. Residue asparagine 48 is glycosylated (N-linked (GlcNAc...) asparagine). 2 cysteine pairs are disulfide-bonded: cysteine 90/cysteine 105 and cysteine 127/cysteine 128.

It belongs to the Wnt family. Post-translationally, palmitoleoylation is required for efficient binding to frizzled receptors. Depalmitoleoylation leads to Wnt signaling pathway inhibition.

The protein localises to the secreted. It localises to the extracellular space. Its subcellular location is the extracellular matrix. In terms of biological role, ligand for members of the frizzled family of seven transmembrane receptors. Functions in the canonical Wnt/beta-catenin signaling pathway. The protein is Protein Wnt-2b-B (wnt2b-b) of Xenopus laevis (African clawed frog).